The chain runs to 555 residues: Protein NRT1/ PTR FAMILY 5.4 (555 aa).

2 helical membrane-spanning segments follow: residues 18 to 38 (AALF…GLAS) and 62 to 82 (WIGV…SILG). Residue T86 is modified to Phosphothreonine. The next 10 helical transmembrane spans lie at 87–107 (VLLT…SVTV), 116–136 (VFFM…PCVM), 159–179 (NYWY…LIFI), 187–207 (LGFS…LIGI), 311–331 (IPIW…NTFF), 348–368 (IPPA…IPLY), 392–412 (IGVG…VEAK), 435–455 (LWLL…IVGM), 470–490 (IGAA…TGII), and 516–536 (YYYW…LFIA).

It belongs to the major facilitator superfamily. Proton-dependent oligopeptide transporter (POT/PTR) (TC 2.A.17) family. In terms of tissue distribution, expressed in roots and flowers.

Its subcellular location is the membrane. This Arabidopsis thaliana (Mouse-ear cress) protein is Protein NRT1/ PTR FAMILY 5.4 (NPF5.4).